A 318-amino-acid chain; its full sequence is Ubiquitin-like domain-containing CTD phosphatase 1 (318 aa).

A Ubiquitin-like domain is found at 3–81 (VSVIIKWGGQ…IMMMGTREES (79 aa)). The FCP1 homology domain maps to 133 to 294 (PRPGKRLLVL…YKLSQYLKEI (162 aa)). Asp-143, Asp-145, and Asp-253 together coordinate Mg(2+).

The cofactor is Mg(2+).

Its subcellular location is the nucleus. The catalysed reaction is O-phospho-L-seryl-[protein] + H2O = L-seryl-[protein] + phosphate. The enzyme catalyses O-phospho-L-threonyl-[protein] + H2O = L-threonyl-[protein] + phosphate. Dephosphorylates 26S nuclear proteasomes, thereby decreasing their proteolytic activity. Recruited to the 19S regulatory particle of the 26S proteasome where it dephosphorylates 19S component psmc2 which impairs psmc2 ATPase activity and disrupts 26S proteasome assembly. Has also been reported to stimulate the proteolytic activity of the 26S proteasome. The polypeptide is Ubiquitin-like domain-containing CTD phosphatase 1 (ublcp1) (Danio rerio (Zebrafish)).